The primary structure comprises 638 residues: Zinc finger and BTB domain-containing protein 22 (638 aa).

The 65-residue stretch at 57–121 folds into the BTB domain; it reads CDVSIRVQGR…AYTGRLSMAA (65 aa). Disordered regions lie at residues 171 to 223, 229 to 248, 335 to 354, and 367 to 451; these read CASV…STSQ, SAAG…APVV, DDED…GEPE, and EPAD…HGAV. The span at 189–210 shows a compositional bias: polar residues; the sequence is SVRSHTSSRASENQSPSSSNYF. Phosphoserine is present on Ser-203. Residues 483–504 form a C2H2-type 1; atypical zinc finger; the sequence is FLCHCGKAFSHKSMRDRHVNMH. 2 C2H2-type zinc fingers span residues 510–532 and 538–559; these read FDCP…MKTH and YECS…HRGH. The segment at 564 to 638 is disordered; it reads HRMGVGGVGS…DFSGGGGAAH (75 aa).

It belongs to the krueppel C2H2-type zinc-finger protein family.

Its subcellular location is the nucleus. May be involved in transcriptional regulation. In Mus musculus (Mouse), this protein is Zinc finger and BTB domain-containing protein 22 (Zbtb22).